We begin with the raw amino-acid sequence, 158 residues long: Mitotic-spindle organizing protein 2 (158 aa).

S34 carries the post-translational modification Phosphoserine. The interval A81–T158 is disordered. A compositionally biased stretch (gly residues) spans K110–P119. A Phosphoserine modification is found at S152.

This sequence belongs to the MOZART2 family. Associates with the gamma-tubulin ring complex (gTuRC) consisting of TUBGCP2, TUBGCP3, TUBGCP4, TUBGCP5 and TUBGCP6 and gamma-tubulin TUBG1 or TUBG2; within the complex, interacts with TUBGCP2; the interaction plays a role in gTuRC activation.

The protein resides in the cytoplasm. It is found in the cytoskeleton. The protein localises to the microtubule organizing center. Its subcellular location is the centrosome. It localises to the spindle. Functionally, required for the recruitment and the assembly of the gamma-tubulin ring complex (gTuRC) at the centrosome. The gTuRC regulates the minus-end nucleation of alpha-beta tubulin heterodimers that grow into microtubule protafilaments, a critical step in centrosome duplication and spindle formation. This chain is Mitotic-spindle organizing protein 2 (MZT2), found in Bos taurus (Bovine).